The chain runs to 389 residues: Dual-specificity RNA methyltransferase RlmN (389 aa).

E94 serves as the catalytic Proton acceptor. Residues 134–367 form the Radical SAM core domain; that stretch reads PRVRVTQCIS…CFVRRRRGDD (234 aa). C141 and C372 are joined by a disulfide. [4Fe-4S] cluster contacts are provided by C148, C152, and C155. Residues 197-198, S229, 253-255, and N329 contribute to the S-adenosyl-L-methionine site; these read GE and SLH. C372 functions as the S-methylcysteine intermediate in the catalytic mechanism.

This sequence belongs to the radical SAM superfamily. RlmN family. [4Fe-4S] cluster serves as cofactor.

The protein localises to the cytoplasm. It carries out the reaction adenosine(2503) in 23S rRNA + 2 reduced [2Fe-2S]-[ferredoxin] + 2 S-adenosyl-L-methionine = 2-methyladenosine(2503) in 23S rRNA + 5'-deoxyadenosine + L-methionine + 2 oxidized [2Fe-2S]-[ferredoxin] + S-adenosyl-L-homocysteine. The catalysed reaction is adenosine(37) in tRNA + 2 reduced [2Fe-2S]-[ferredoxin] + 2 S-adenosyl-L-methionine = 2-methyladenosine(37) in tRNA + 5'-deoxyadenosine + L-methionine + 2 oxidized [2Fe-2S]-[ferredoxin] + S-adenosyl-L-homocysteine. In terms of biological role, specifically methylates position 2 of adenine 2503 in 23S rRNA and position 2 of adenine 37 in tRNAs. m2A2503 modification seems to play a crucial role in the proofreading step occurring at the peptidyl transferase center and thus would serve to optimize ribosomal fidelity. The sequence is that of Dual-specificity RNA methyltransferase RlmN from Sorangium cellulosum (strain So ce56) (Polyangium cellulosum (strain So ce56)).